A 291-amino-acid chain; its full sequence is Kidney mitochondrial carrier protein 1 (291 aa).

An N-acetylserine modification is found at S2. 3 Solcar repeats span residues 7–96, 104–189, and 198–289; these read KPFV…LKRL, ETLL…TKKH, and DTVA…LKKL. 6 consecutive transmembrane segments (helical) span residues 9–26, 71–89, 106–124, 164–183, 204–224, and 264–283; these read FVYG…TFPI, GIAP…KIGT, LLVN…SAIA, GVSL…LPVY, FLSS…VDVV, and GFWP…FLTY.

Belongs to the mitochondrial carrier (TC 2.A.29) family. Interacts with VDAC1. As to expression, present in kidney (at protein level). Expressed predominantly within the kidney cortex in the proximal and distal tubules and at lower levels in the testis and white adipose tissue.

It is found in the mitochondrion inner membrane. It carries out the reaction sulfite(in) + sulfate(out) = sulfite(out) + sulfate(in). The catalysed reaction is thiosulfate(in) + sulfate(out) = thiosulfate(out) + sulfate(in). It catalyses the reaction sulfate(out) + phosphate(in) = sulfate(in) + phosphate(out). The enzyme catalyses oxalate(in) + sulfate(out) = oxalate(out) + sulfate(in). It carries out the reaction malonate(in) + sulfate(out) = malonate(out) + sulfate(in). The catalysed reaction is maleate(in) + sulfate(out) = maleate(out) + sulfate(in). It catalyses the reaction (S)-malate(in) + sulfate(out) = (S)-malate(out) + sulfate(in). The enzyme catalyses (3S)-citramalate(in) + sulfate(out) = (3S)-citramalate(out) + sulfate(in). It carries out the reaction (3R)-citramalate(in) + sulfate(out) = (3R)-citramalate(out) + sulfate(in). The catalysed reaction is sulfate(out) + succinate(in) = sulfate(in) + succinate(out). It catalyses the reaction (S,S)-tartrate(in) + sulfate(out) = (S,S)-tartrate(out) + sulfate(in). The enzyme catalyses (2R,3R)-tartrate(in) + sulfate(out) = (2R,3R)-tartrate(out) + sulfate(in). It carries out the reaction D-aspartate(in) + sulfate(out) = D-aspartate(out) + sulfate(in). The catalysed reaction is L-aspartate(in) + sulfate(out) = L-aspartate(out) + sulfate(in). It catalyses the reaction sulfate(in) = sulfate(out). The enzyme catalyses phosphate(in) = phosphate(out). It carries out the reaction (S)-malate(out) = (S)-malate(in). Antiporter that transports inorganic anions (sulfate, sulfite, thiosulfate and phosphate) and, to a lesser extent, a variety of dicarboxylates (e.g. malonate, malate and citramalate) and, even more so, aspartate. The sulfate/sulfate exchange is much higher than the phosphate/phosphate and malate/malate exchanges. The transport affinities is higher for sulfate and thiosulfate than for any other substrate. May catalyze the export of sulfite and thiosulfate (the hydrogen sulfide degradation products) from the mitochondria, thereby modulating the level of the hydrogen sulfide. Also may mediate a very low unidirectional transport of sulfate, phosphate and (S)-malate. This is Kidney mitochondrial carrier protein 1 from Mus musculus (Mouse).